Consider the following 200-residue polypeptide: dITP/XTP pyrophosphatase (200 aa).

Threonine 8–lysine 13 lines the substrate pocket. Residues glutamate 41 and aspartate 71 each coordinate Mg(2+). Catalysis depends on aspartate 71, which acts as the Proton acceptor. Substrate contacts are provided by residues threonine 72, phenylalanine 153 to aspartate 156, lysine 176, and histidine 181 to arginine 182.

Belongs to the HAM1 NTPase family. In terms of assembly, homodimer. Mg(2+) is required as a cofactor.

It catalyses the reaction XTP + H2O = XMP + diphosphate + H(+). The catalysed reaction is dITP + H2O = dIMP + diphosphate + H(+). The enzyme catalyses ITP + H2O = IMP + diphosphate + H(+). Its function is as follows. Pyrophosphatase that catalyzes the hydrolysis of nucleoside triphosphates to their monophosphate derivatives, with a high preference for the non-canonical purine nucleotides XTP (xanthosine triphosphate), dITP (deoxyinosine triphosphate) and ITP. Seems to function as a house-cleaning enzyme that removes non-canonical purine nucleotides from the nucleotide pool, thus preventing their incorporation into DNA/RNA and avoiding chromosomal lesions. This chain is dITP/XTP pyrophosphatase, found in Caldanaerobacter subterraneus subsp. tengcongensis (strain DSM 15242 / JCM 11007 / NBRC 100824 / MB4) (Thermoanaerobacter tengcongensis).